The chain runs to 329 residues: METFGVFHKEDDEQMDLPPGFRFHPTDEELITHYLHKKVLDLGFSAKAIGEVDLNKAEPWELPYKAKIGEKEWYFFCVRDRKYPTGLRTNRATQAGYWKATGKDKEIFRGKSLVGMKKTLVFYRGRAPKGQKTNWVMHEYRLDGKLSAHNLPKTAKNEWVICRVFHKTAGGKKIPISTLIRIGSYGTGSSLPPLTDSSPYNDKTKTEPVYVPCFSNQAETRGTILNCFSNPSLSSIQPDFLQMIPLYQPQSLNISESSNPVLTQEQSVLQAMMENNRRQNFKTLSISQETGVSNTDNSSVFEFGRKRFDHQEVPSPSSGPVDLEPFWNY.

Positions 17–167 (LPPGFRFHPT…EWVICRVFHK (151 aa)) constitute an NAC domain. A DNA-binding region spans residues 114-173 (VGMKKTLVFYRGRAPKGQKTNWVMHEYRLDGKLSAHNLPKTAKNEWVICRVFHKTAGGKK).

As to expression, expressed at low levels in leaves.

It is found in the nucleus. This Arabidopsis thaliana (Mouse-ear cress) protein is NAC domain-containing protein 79.